A 259-amino-acid chain; its full sequence is Proteasome subunit alpha (259 aa).

It belongs to the peptidase T1A family. The 20S proteasome core is composed of 14 alpha and 14 beta subunits that assemble into four stacked heptameric rings, resulting in a barrel-shaped structure. The two inner rings, each composed of seven catalytic beta subunits, are sandwiched by two outer rings, each composed of seven alpha subunits. The catalytic chamber with the active sites is on the inside of the barrel. Has a gated structure, the ends of the cylinder being occluded by the N-termini of the alpha-subunits. Is capped at one or both ends by the proteasome regulatory ATPase, PAN.

Its subcellular location is the cytoplasm. Its activity is regulated as follows. The formation of the proteasomal ATPase PAN-20S proteasome complex, via the docking of the C-termini of PAN into the intersubunit pockets in the alpha-rings, triggers opening of the gate for substrate entry. Interconversion between the open-gate and close-gate conformations leads to a dynamic regulation of the 20S proteasome proteolysis activity. Component of the proteasome core, a large protease complex with broad specificity involved in protein degradation. This is Proteasome subunit alpha from Methanococcus maripaludis (strain C5 / ATCC BAA-1333).